We begin with the raw amino-acid sequence, 442 residues long: Probable diguanylate cyclase DgcI (442 aa).

A signal peptide spans 1–23 (MSRINKFVLTVSLLIFIMISAVA). C24 is lipidated: N-palmitoyl cysteine. C24 carries the S-diacylglycerol cysteine lipid modification. Residues 231–251 (LIIFFAALVAVISGASCLYLV) form a helical membrane-spanning segment. One can recognise a GGDEF domain in the interval 319-442 (KGGYLCLFDV…KNGRAQISWQ (124 aa)). D327 is a binding site for Mg(2+). N335, H340, and D344 together coordinate substrate. D371 contributes to the Mg(2+) binding site.

Homodimer. The cofactor is Mg(2+).

The protein resides in the cell membrane. The catalysed reaction is 2 GTP = 3',3'-c-di-GMP + 2 diphosphate. It functions in the pathway purine metabolism; 3',5'-cyclic di-GMP biosynthesis. In terms of biological role, catalyzes the synthesis of cyclic-di-GMP (c-di-GMP) via the condensation of 2 GTP molecules. The polypeptide is Probable diguanylate cyclase DgcI (Escherichia coli (strain K12)).